A 444-amino-acid polypeptide reads, in one-letter code: Tol-Pal system protein TolB (444 aa).

A signal peptide spans 1–19 (MRNIIYFILSLLFSVTSYA).

This sequence belongs to the TolB family. In terms of assembly, the Tol-Pal system is composed of five core proteins: the inner membrane proteins TolA, TolQ and TolR, the periplasmic protein TolB and the outer membrane protein Pal. They form a network linking the inner and outer membranes and the peptidoglycan layer.

It is found in the periplasm. Its function is as follows. Part of the Tol-Pal system, which plays a role in outer membrane invagination during cell division and is important for maintaining outer membrane integrity. The sequence is that of Tol-Pal system protein TolB from Rickettsia rickettsii (strain Iowa).